The sequence spans 322 residues: Lymphatic vessel endothelial hyaluronic acid receptor 1 (322 aa).

A signal peptide spans 1 to 19 (MARCFSLVLLLTSIWTTRL). Topologically, residues 20 to 238 (LVQGSLRAEE…EAAGFGGVPT (219 aa)) are extracellular. A Link domain is found at 40–130 (GITLVSKKAN…SRQFAAYCYN (91 aa)). Asparagine 53 carries an N-linked (GlcNAc...) asparagine glycan. Disulfide bonds link cysteine 61/cysteine 128 and cysteine 85/cysteine 106. Asparagine 130 is a glycosylation site (N-linked (GlcNAc...) asparagine). A helical membrane pass occupies residues 239 to 259 (ALLVLALLFFGAAAGLGFCYV). Topologically, residues 260 to 322 (KRYVKAFPFT…TTVRCLEAEV (63 aa)) are cytoplasmic. A compositionally biased stretch (basic and acidic residues) spans 279–309 (ETKVVKEEKANDSNPNEESKKTDKNPEESKS). The disordered stretch occupies residues 279–322 (ETKVVKEEKANDSNPNEESKKTDKNPEESKSPSKTTVRCLEAEV).

Homodimer; disulfide-linked. Interacts with PDGFB and IGFBP3. Forms a transient ternary complex with PDGFB and PDGFRB in TGN. O-glycosylated. As to expression, mainly expressed in endothelial cells lining lymphatic vessels.

The protein resides in the cell membrane. In terms of biological role, ligand-specific transporter trafficking between intracellular organelles (TGN) and the plasma membrane. Plays a role in autocrine regulation of cell growth mediated by growth regulators containing cell surface retention sequence binding (CRS). May act as a hyaluronan (HA) transporter, either mediating its uptake for catabolism within lymphatic endothelial cells themselves, or its transport into the lumen of afferent lymphatic vessels for subsequent re-uptake and degradation in lymph nodes. Binds to pericelluar hyaluronan matrices deposited on the surface of leukocytes and facilitates cell adhesion and migration through lymphatic endothelium. In Homo sapiens (Human), this protein is Lymphatic vessel endothelial hyaluronic acid receptor 1 (LYVE1).